A 441-amino-acid chain; its full sequence is 4-hydroxy-3-methylbut-2-en-1-yl diphosphate synthase (flavodoxin) (441 aa).

Residues Cys320, Cys323, Cys366, and Glu373 each coordinate [4Fe-4S] cluster.

The protein belongs to the IspG family. [4Fe-4S] cluster serves as cofactor.

The enzyme catalyses (2E)-4-hydroxy-3-methylbut-2-enyl diphosphate + oxidized [flavodoxin] + H2O + 2 H(+) = 2-C-methyl-D-erythritol 2,4-cyclic diphosphate + reduced [flavodoxin]. It functions in the pathway isoprenoid biosynthesis; isopentenyl diphosphate biosynthesis via DXP pathway; isopentenyl diphosphate from 1-deoxy-D-xylulose 5-phosphate: step 5/6. In terms of biological role, converts 2C-methyl-D-erythritol 2,4-cyclodiphosphate (ME-2,4cPP) into 1-hydroxy-2-methyl-2-(E)-butenyl 4-diphosphate. This chain is 4-hydroxy-3-methylbut-2-en-1-yl diphosphate synthase (flavodoxin), found in Rhodopseudomonas palustris (strain ATCC BAA-98 / CGA009).